The sequence spans 445 residues: Tubulin beta chain (445 aa).

An MREI motif motif is present at residues 1 to 4 (MREI). 8 residues coordinate GTP: Q11, E69, S138, G142, T143, G144, N204, and N226. Residue E69 participates in Mg(2+) binding. A disordered region spans residues 421–445 (EYQQYQDATAEEEGEGEEEGDEEVA). Positions 429-445 (TAEEEGEGEEEGDEEVA) are enriched in acidic residues. E438 bears the 5-glutamyl polyglutamate mark.

It belongs to the tubulin family. As to quaternary structure, dimer of alpha and beta chains. A typical microtubule is a hollow water-filled tube with an outer diameter of 25 nm and an inner diameter of 15 nM. Alpha-beta heterodimers associate head-to-tail to form protofilaments running lengthwise along the microtubule wall with the beta-tubulin subunit facing the microtubule plus end conferring a structural polarity. Microtubules usually have 13 protofilaments but different protofilament numbers can be found in some organisms and specialized cells. The cofactor is Mg(2+). Some glutamate residues at the C-terminus are polyglycylated, resulting in polyglycine chains on the gamma-carboxyl group. Glycylation is mainly limited to tubulin incorporated into axonemes (cilia and flagella) whereas glutamylation is prevalent in neuronal cells, centrioles, axonemes, and the mitotic spindle. Both modifications can coexist on the same protein on adjacent residues, and lowering polyglycylation levels increases polyglutamylation, and reciprocally. The precise function of polyglycylation is still unclear. In terms of processing, some glutamate residues at the C-terminus are polyglutamylated, resulting in polyglutamate chains on the gamma-carboxyl group. Polyglutamylation plays a key role in microtubule severing by spastin (SPAST). SPAST preferentially recognizes and acts on microtubules decorated with short polyglutamate tails: severing activity by SPAST increases as the number of glutamates per tubulin rises from one to eight, but decreases beyond this glutamylation threshold. Brain.

It is found in the cytoplasm. It localises to the cytoskeleton. Tubulin is the major constituent of microtubules, a cylinder consisting of laterally associated linear protofilaments composed of alpha- and beta-tubulin heterodimers. Microtubules grow by the addition of GTP-tubulin dimers to the microtubule end, where a stabilizing cap forms. Below the cap, tubulin dimers are in GDP-bound state, owing to GTPase activity of alpha-tubulin. In Pseudopleuronectes americanus (Winter flounder), this protein is Tubulin beta chain.